The following is a 349-amino-acid chain: Cdc42 effector protein 4 (349 aa).

Position 5 is an N6-methyllysine (lysine 5). Serine 18 is subject to Phosphoserine. The 15-residue stretch at 27-41 (ISAPLGDFRHTMHVG) folds into the CRIB domain. Phosphoserine is present on residues serine 64, serine 103, serine 107, and serine 116. The segment covering 123–132 (KEAAEKDSSK) has biased composition (basic and acidic residues). 3 disordered regions span residues 123-172 (KEAA…LLDE), 220-240 (QWGS…GPSS), and 278-349 (GWAV…EIRV). Phosphoserine is present on residues serine 136, serine 138, serine 140, serine 154, serine 165, serine 223, serine 285, and serine 288. Low complexity predominate over residues 280–308 (AVVAPSPSSARSVGSHTTRDSSSLSSYTS). Positions 311–322 (LEERSPAFRGPD) are enriched in basic and acidic residues. Over residues 338 to 349 (FMDEEEEDEIRV) the composition is skewed to acidic residues.

This sequence belongs to the BORG/CEP family. Interacts with CDC42 and RHOQ, in a GTP-dependent manner. As to expression, ubiquitous.

The protein localises to the endomembrane system. It localises to the cytoplasm. It is found in the cytoskeleton. In terms of biological role, probably involved in the organization of the actin cytoskeleton. May act downstream of CDC42 to induce actin filament assembly leading to cell shape changes. Induces pseudopodia formation, when overexpressed in fibroblasts. The chain is Cdc42 effector protein 4 (Cdc42ep4) from Mus musculus (Mouse).